A 941-amino-acid chain; its full sequence is Bifunctional uridylyltransferase/uridylyl-removing enzyme (941 aa).

Positions 1 to 372 (MAKHDLSDAT…RFAHRPRRIP (372 aa)) are uridylyltransferase. Residues 373 to 728 (GTPEFIEDRG…VRTHSFHAIT (356 aa)) are uridylyl-removing. The 123-residue stretch at 489–611 (VDEHLIRSVG…VQSLDRLRML (123 aa)) folds into the HD domain. 2 ACT domains span residues 729–810 (EITV…EVIA) and 840–919 (VIEI…LREQ). Residues 916-941 (LREQMPSGIIAPAATKSPAAEKKARV) form a disordered region.

The protein belongs to the GlnD family. The cofactor is Mg(2+).

It carries out the reaction [protein-PII]-L-tyrosine + UTP = [protein-PII]-uridylyl-L-tyrosine + diphosphate. The enzyme catalyses [protein-PII]-uridylyl-L-tyrosine + H2O = [protein-PII]-L-tyrosine + UMP + H(+). Uridylyltransferase (UTase) activity is inhibited by glutamine, while glutamine activates uridylyl-removing (UR) activity. Its function is as follows. Modifies, by uridylylation and deuridylylation, the PII regulatory proteins (GlnB and homologs), in response to the nitrogen status of the cell that GlnD senses through the glutamine level. Under low glutamine levels, catalyzes the conversion of the PII proteins and UTP to PII-UMP and PPi, while under higher glutamine levels, GlnD hydrolyzes PII-UMP to PII and UMP (deuridylylation). Thus, controls uridylylation state and activity of the PII proteins, and plays an important role in the regulation of nitrogen assimilation and metabolism. The polypeptide is Bifunctional uridylyltransferase/uridylyl-removing enzyme (Allorhizobium ampelinum (strain ATCC BAA-846 / DSM 112012 / S4) (Agrobacterium vitis (strain S4))).